The sequence spans 360 residues: DAZ-associated protein 1 (360 aa).

RRM domains are found at residues 10-97 and 114-191; these read GKLF…RSRP and NKIF…RAEP. Disordered regions lie at residues 73–116 and 184–345; these read HTLD…SNKI and VEVK…DFPF. Basic and acidic residues-rich tracts occupy residues 91–112 and 184–195; these read QPERSRPREGWQQKEPRTENSR and VEVKRAEPRDSK. The segment covering 203–231 has biased composition (polar residues); that stretch reads GSNQWGSRAMQSTANGWTGQPPQTWQGYS. Positions 242 to 253 are enriched in gly residues; the sequence is TIGGYGQPAGRG. The segment covering 271-301 has biased composition (pro residues); sequence GPFPPPQGFPPGYATPPPFGYGYGPPPPPPD. Positions 328–345 are enriched in polar residues; the sequence is QSAQDLSKPPSGQQDFPF.

As to quaternary structure, component of a mRNP complex, at least composed of DAZAP1, IGF2BP3-A, STAU and VgRBP60. Binds to the 3'-UTR of Vg1 mRNA. Interacts with profilin, a protein involved in actin assembly. Interacts with VgRBP71. Expressed in oocytes.

The protein localises to the cytoplasm. RNA-binding protein, which is required during gametogenesis. May be involved in the actin-dependent anchoring of Vg1 mRNA in the vegetal cortex of the oocyte. The polypeptide is DAZ-associated protein 1 (dazap1) (Xenopus laevis (African clawed frog)).